The following is a 267-amino-acid chain: Cell division control protein 11 (267 aa).

The Septin-type G domain occupies 6 to 263 (QNRRFTIMAA…ENYRAAVLEG (258 aa)). A G1 motif region spans residues 16 to 23 (GPRGSGKS). Residues 16 to 23 (GPRGSGKS), Gly66, 146 to 154 (KSDGLSITE), and Arg212 contribute to the GTP site. A G3 motif region spans residues 63–66 (DTPG). Residues 145-148 (SKSD) form a G4 motif region.

Belongs to the TRAFAC class TrmE-Era-EngA-EngB-Septin-like GTPase superfamily. Septin GTPase family. In terms of assembly, component of the septin complex.

In terms of biological role, septins are GTPases involved in cytokinesis. The septins localize to the site of cleavage and act as a structural scaffold that recruits different components involved in diverse processes at specific stages during the cell cycle. Septins are also involved in cell morphogenesis, chitin deposition, cell cycle regulation, cell compartmentalization and spore wall formation. In Encephalitozoon cuniculi (strain GB-M1) (Microsporidian parasite), this protein is Cell division control protein 11 (CDC11).